A 415-amino-acid chain; its full sequence is Serine hydroxymethyltransferase (415 aa).

(6S)-5,6,7,8-tetrahydrofolate is bound by residues L120 and 124 to 126 (GHL). K229 is modified (N6-(pyridoxal phosphate)lysine).

This sequence belongs to the SHMT family. Homodimer. Pyridoxal 5'-phosphate serves as cofactor.

The protein localises to the cytoplasm. It catalyses the reaction (6R)-5,10-methylene-5,6,7,8-tetrahydrofolate + glycine + H2O = (6S)-5,6,7,8-tetrahydrofolate + L-serine. It functions in the pathway one-carbon metabolism; tetrahydrofolate interconversion. Its pathway is amino-acid biosynthesis; glycine biosynthesis; glycine from L-serine: step 1/1. In terms of biological role, catalyzes the reversible interconversion of serine and glycine with tetrahydrofolate (THF) serving as the one-carbon carrier. This reaction serves as the major source of one-carbon groups required for the biosynthesis of purines, thymidylate, methionine, and other important biomolecules. Also exhibits THF-independent aldolase activity toward beta-hydroxyamino acids, producing glycine and aldehydes, via a retro-aldol mechanism. This is Serine hydroxymethyltransferase from Desulforudis audaxviator (strain MP104C).